Reading from the N-terminus, the 219-residue chain is Ribose-5-phosphate isomerase A (219 aa).

Residues 28–31, 81–84, and 94–97 contribute to the substrate site; these read TGST, DGAD, and KGGG. Glutamate 103 acts as the Proton acceptor in catalysis. Residue lysine 121 participates in substrate binding.

It belongs to the ribose 5-phosphate isomerase family. Homodimer.

It catalyses the reaction aldehydo-D-ribose 5-phosphate = D-ribulose 5-phosphate. It functions in the pathway carbohydrate degradation; pentose phosphate pathway; D-ribose 5-phosphate from D-ribulose 5-phosphate (non-oxidative stage): step 1/1. Catalyzes the reversible conversion of ribose-5-phosphate to ribulose 5-phosphate. This is Ribose-5-phosphate isomerase A from Shewanella loihica (strain ATCC BAA-1088 / PV-4).